A 296-amino-acid polypeptide reads, in one-letter code: GTPase Era (296 aa).

The Era-type G domain occupies 3–170 (KSGFVTIVGR…KELMFKYIPE (168 aa)). Residues 11 to 18 (GRPNVGKS) form a G1 region. 11 to 18 (GRPNVGKS) contributes to the GTP binding site. Residues 37–41 (QTTRN) form a G2 region. The tract at residues 58–61 (DTPG) is G3. GTP-binding positions include 58–62 (DTPGI) and 120–123 (NKID). The tract at residues 120–123 (NKID) is G4. A G5 region spans residues 149–151 (ISA). Residues 201–278 (LSEEVPHGIA…YIRLWVKVKE (78 aa)) form the KH type-2 domain.

It belongs to the TRAFAC class TrmE-Era-EngA-EngB-Septin-like GTPase superfamily. Era GTPase family. In terms of assembly, monomer.

The protein localises to the cytoplasm. Its subcellular location is the cell membrane. An essential GTPase that binds both GDP and GTP, with rapid nucleotide exchange. Plays a role in 16S rRNA processing and 30S ribosomal subunit biogenesis and possibly also in cell cycle regulation and energy metabolism. In Clostridium botulinum (strain Kyoto / Type A2), this protein is GTPase Era.